A 1050-amino-acid polypeptide reads, in one-letter code: Self-sufficient cytochrome P450 monooxygenase CYP505E5 (1050 aa).

Residue Cys-405 participates in heme binding. The interval 467–491 is disordered; the sequence is RRSMLVARDGSSGESSNHLAEARGD. The Flavodoxin-like domain occupies 500 to 641; the sequence is VSFFYGSNSG…DLEAWEETSL (142 aa). Residues 506–510 and 585–617 each bind FMN; these read SNSGT and VFGC…TRLA. Residues 679–907 form the FAD-binding FR-type domain; that stretch reads KGLIEAKVTA…RPAKESFHLP (229 aa).

The protein in the N-terminal section; belongs to the cytochrome P450 family. FAD serves as cofactor. Requires FMN as cofactor. The cofactor is heme.

It catalyses the reaction 2 oxidized [cytochrome P450] + NADPH = 2 reduced [cytochrome P450] + NADP(+) + H(+). The catalysed reaction is an organic molecule + reduced [NADPH--hemoprotein reductase] + O2 = an alcohol + oxidized [NADPH--hemoprotein reductase] + H2O + H(+). It carries out the reaction dodecanoate + reduced [NADPH--hemoprotein reductase] + O2 = 5-hydroxydodecanoate + oxidized [NADPH--hemoprotein reductase] + H2O + H(+). The enzyme catalyses tetradecanoate + reduced [NADPH--hemoprotein reductase] + O2 = 7-hydroxytetradecanoate + oxidized [NADPH--hemoprotein reductase] + H2O + H(+). It catalyses the reaction dodecan-1-ol + reduced [NADPH--hemoprotein reductase] + O2 = 1,5-dodecanediol + oxidized [NADPH--hemoprotein reductase] + H2O + H(+). The catalysed reaction is dodecan-1-ol + reduced [NADPH--hemoprotein reductase] + O2 = 1,4-dodecanediol + oxidized [NADPH--hemoprotein reductase] + H2O + H(+). It carries out the reaction dodecan-1-ol + reduced [NADPH--hemoprotein reductase] + O2 = 1,6-dodecanediol + oxidized [NADPH--hemoprotein reductase] + H2O + H(+). Functionally, self-sufficient cytochrome P450 monooxygenase that catalyzes the regioselective in-chain hydroxylation of alkanes, fatty alcohols, and fatty acids at the omega-7 position. Performs hydroxylation of C10-C16 n-alkanes and C12 and C14 fatty alcohols; and thereby enables the one step biocatalytic synthesis of rare alcohols such as 5-dodecanol and 7-tetradecanol. Converts 1-dodecanol into 1,5-dodecanediol as major product with very little sub-terminally hydroxylated products with the 1,4-dodecanediol and 1,6-dodecanediol more abundant. Converts dodecanoic acid to 5-hydroxydodecanoic acid which can be further converted into delta-dodecalactone by lactonization of the 5-hydroxy acid at low pH. Also gives sub-terminal hydroxylation of dodecanoic acid with 9-hydroxydodecanoic acid being the second most abundant product. The protein is Self-sufficient cytochrome P450 monooxygenase CYP505E5 of Aspergillus niger.